The primary structure comprises 175 residues: Large ribosomal subunit protein uL10 (175 aa).

This sequence belongs to the universal ribosomal protein uL10 family. As to quaternary structure, part of the ribosomal stalk of the 50S ribosomal subunit. The N-terminus interacts with L11 and the large rRNA to form the base of the stalk. The C-terminus forms an elongated spine to which L12 dimers bind in a sequential fashion forming a multimeric L10(L12)X complex.

Forms part of the ribosomal stalk, playing a central role in the interaction of the ribosome with GTP-bound translation factors. The sequence is that of Large ribosomal subunit protein uL10 from Psychrobacter arcticus (strain DSM 17307 / VKM B-2377 / 273-4).